Here is a 704-residue protein sequence, read N- to C-terminus: ATP-dependent DNA helicase Hel308 (704 aa).

ATP-binding positions include Gln-31 and 49 to 56 (SPTASGKT). The 165-residue stretch at 36-200 (RKGLLDGKRL…WLNAELVATN (165 aa)) folds into the Helicase ATP-binding domain. A DEAH box motif is present at residues 148-151 (DEFH). A Helicase C-terminal domain is found at 235-439 (AIIAYTLDIV…AFYSFLISII (205 aa)). The interval 366 to 645 (VVGYMDLIPV…LHARVKDGVK (280 aa)) is binds Hjc. A required for helicase activity region spans residues 432–644 (YSFLISIIAS…ELHARVKDGV (213 aa)). Residues 646–704 (PELIELVKIPGIGRVRARLLYQHDIKKPEDIVLNPEKVKQLLGPNLGEKIVREAARTIA) are inhibits intrinsic ATPase, and helicase.

It belongs to the helicase family. Hel308 subfamily. Monomer; forms a 1:2 complex with Hjc, which may form a complex with Holliday junction DNA. The cofactor is Mg(2+).

It catalyses the reaction Couples ATP hydrolysis with the unwinding of duplex DNA by translocating in the 3'-5' direction.. The enzyme catalyses ATP + H2O = ADP + phosphate + H(+). It carries out the reaction Couples ATP hydrolysis with the unwinding of duplex DNA at the replication fork by translocating in the 5'-3' direction. This creates two antiparallel DNA single strands (ssDNA). The leading ssDNA polymer is the template for DNA polymerase III holoenzyme which synthesizes a continuous strand.. With respect to regulation, helicase activity is inhibited by Hjc and by PCNA123 and PCNA323. In terms of biological role, an ATP, Mg(2+)-dependent DNA 3'-5' and 5'-3' helicase that may be involved in repair of stalled replication forks. Stimulated by both ss and dsDNA. Unwinds both leading and lagging strands in replication fork structures, unlike orthologs in P.furiosus and M.thermautotrophicus which only unwind the lagging strand and only have 3'-5' helicase activity. Preferentially binds dsDNA with overhangs or branched DNA. Able to anneal DNA substrates that could form a replication fork-like structure, has replication fork reversal activity (at least in vitro). The chain is ATP-dependent DNA helicase Hel308 from Sulfurisphaera tokodaii (strain DSM 16993 / JCM 10545 / NBRC 100140 / 7) (Sulfolobus tokodaii).